We begin with the raw amino-acid sequence, 494 residues long: 4-trimethylaminobutyraldehyde dehydrogenase (494 aa).

Residue Ser-2 is modified to N-acetylserine. Lys-30 is subject to N6-acetyllysine; alternate. Residue Lys-30 is modified to N6-succinyllysine; alternate. Lys-59 carries the post-translational modification N6-succinyllysine. NAD(+) contacts are provided by residues Lys-180 and 232–236 (GSVPT). The active-site Proton acceptor is the Glu-254. The active-site Nucleophile is the Cys-288. N6-acetyllysine is present on Lys-298. Lys-303 carries the post-translational modification N6-acetyllysine; alternate. Lys-303 bears the N6-succinyllysine; alternate mark. The residue at position 344 (Lys-344) is an N6-acetyllysine. Glu-391 serves as a coordination point for NAD(+).

Belongs to the aldehyde dehydrogenase family. Homotetramer.

It localises to the cytoplasm. It is found in the cytosol. The enzyme catalyses 4-(trimethylamino)butanal + NAD(+) + H2O = 4-(trimethylamino)butanoate + NADH + 2 H(+). The catalysed reaction is an aldehyde + NAD(+) + H2O = a carboxylate + NADH + 2 H(+). It carries out the reaction 4-aminobutanal + NAD(+) + H2O = 4-aminobutanoate + NADH + 2 H(+). It catalyses the reaction formaldehyde + NAD(+) + H2O = formate + NADH + 2 H(+). The enzyme catalyses acetaldehyde + NAD(+) + H2O = acetate + NADH + 2 H(+). The catalysed reaction is imidazole-4-acetaldehyde + NAD(+) + H2O = imidazole-4-acetate + NADH + 2 H(+). It carries out the reaction acrolein + NAD(+) + H2O = acrylate + NADH + 2 H(+). It catalyses the reaction (5-hydroxyindol-3-yl)acetaldehyde + NAD(+) + H2O = (5-hydroxyindol-3-yl)acetate + NADH + 2 H(+). The enzyme catalyses 3,4-dihydroxyphenylacetaldehyde + NAD(+) + H2O = 3,4-dihydroxyphenylacetate + NADH + 2 H(+). The catalysed reaction is spermine monoaldehyde + NAD(+) + H2O = N-(2-carboxyethyl)spermidine + NADH + 2 H(+). It carries out the reaction propanal + NAD(+) + H2O = propanoate + NADH + 2 H(+). It catalyses the reaction butanal + NAD(+) + H2O = butanoate + NADH + 2 H(+). The enzyme catalyses pentanal + NAD(+) + H2O = pentanoate + NADH + 2 H(+). The catalysed reaction is hexanal + NAD(+) + H2O = hexanoate + NADH + 2 H(+). It functions in the pathway amine and polyamine biosynthesis; carnitine biosynthesis. Functionally, converts gamma-trimethylaminobutyraldehyde into gamma-butyrobetaine with high efficiency (in vitro). Can catalyze the irreversible oxidation of a broad range of aldehydes to the corresponding acids in an NAD-dependent reaction, but with low efficiency. Catalyzes the oxidation of aldehydes arising from biogenic amines and polyamines. This is 4-trimethylaminobutyraldehyde dehydrogenase (ALDH9A1) from Pongo abelii (Sumatran orangutan).